The following is a 335-amino-acid chain: 2-acylglycerol O-acyltransferase 1 (335 aa).

Transmembrane regions (helical) follow at residues 24-44 (WVLS…MLVL) and 104-124 (YIFG…NFCT). Asn-180 carries an N-linked (GlcNAc...) asparagine glycan.

It belongs to the diacylglycerol acyltransferase family. Expressed at high level in kidney and stomach. Expressed at lower level in brown and white adipose tissue, uterus and liver. Not detected in small intestine.

It is found in the endoplasmic reticulum membrane. The enzyme catalyses a 2-acylglycerol + an acyl-CoA = a 1,2-diacylglycerol + CoA. The catalysed reaction is 2-(9Z-octadecenoyl)-glycerol + butanoyl-CoA = 1-butanoyl-2-(9Z-octadecenoyl)-glycerol + CoA. It catalyses the reaction 2-(9Z-octadecenoyl)-glycerol + octanoyl-CoA = 1-octanoyl-2-(9Z-octadecenoyl)-glycerol + CoA. It carries out the reaction 2-(9Z-octadecenoyl)-glycerol + dodecanoyl-CoA = 1-dodecanoyl-2-(9Z-octadecenoyl)-glycerol + CoA. The enzyme catalyses 2-(9Z-octadecenoyl)-glycerol + tetradecanoyl-CoA = 1-tetradecanoyl-2-(9Z-octadecenoyl)-glycerol + CoA. The catalysed reaction is 2-(9Z-octadecenoyl)-glycerol + hexadecanoyl-CoA = 1-hexadecanoyl-2-(9Z-octadecenoyl)-glycerol + CoA. It catalyses the reaction 2-(9Z-octadecenoyl)-glycerol + octadecanoyl-CoA = 1-octadecanoyl-2-(9Z-octadecenoyl)-glycerol + CoA. It carries out the reaction eicosanoyl-CoA + 2-(9Z-octadecenoyl)-glycerol = 1-eicosanoyl-2-(9Z-octadecenoyl)-glycerol + CoA. The enzyme catalyses 2-(9Z-octadecenoyl)-glycerol + (9Z)-octadecenoyl-CoA = 1,2-di-(9Z-octadecenoyl)-glycerol + CoA. The catalysed reaction is 2-(9Z-octadecenoyl)-glycerol + (9Z,12Z)-octadecadienoyl-CoA = 1-(9Z,12Z-octadecadienoyl)-2-(9Z-octadecenoyl)-glycerol + CoA. It catalyses the reaction 2-(9Z-octadecenoyl)-glycerol + (5Z,8Z,11Z,14Z)-eicosatetraenoyl-CoA = 1-(5Z,8Z,11Z,14Z-eicosatetraenoyl)-2-(9Z-octadecenoyl)-glycerol + CoA. It carries out the reaction a 2-acylglycerol + an acyl-CoA = a 1,2-diacyl-sn-glycerol + CoA. The enzyme catalyses a 2-acylglycerol + an acyl-CoA = a 2,3-diacyl-sn-glycerol + CoA. The catalysed reaction is a 1-acylglycerol + an acyl-CoA = a 1,2-diacylglycerol + CoA. It catalyses the reaction 1-dodecanoylglycerol + (9Z)-octadecenoyl-CoA = 1-dodecanoyl-2-(9Z-octadecenoyl)-glycerol + CoA. It carries out the reaction 1-tetradecanoylglycerol + (9Z)-octadecenoyl-CoA = 1-tetradecanoyl-2-(9Z-octadecenoyl)-glycerol + CoA. The enzyme catalyses 1-hexadecanoylglycerol + (9Z)-octadecenoyl-CoA = 1-hexadecanoyl-2-(9Z-octadecenoyl)-glycerol + CoA. The catalysed reaction is 1-(9Z-octadecenoyl)-glycerol + (9Z)-octadecenoyl-CoA = 1,2-di-(9Z-octadecenoyl)-glycerol + CoA. It catalyses the reaction 1-(9Z,12Z-octadecadienoyl)-glycerol + (9Z)-octadecenoyl-CoA = 1-(9Z,12Z-octadecadienoyl)-2-(9Z-octadecenoyl)-glycerol + CoA. It carries out the reaction 1-(9Z,12Z,15Z-octadecatrienoyl)-glycerol + (9Z)-octadecenoyl-CoA = 1-(9Z,12Z,15Z-octadecatrienoyl)-2-(9Z-octadecenoyl)-glycerol + CoA. The enzyme catalyses 1-(5Z,8Z,11Z,14Z-eicosatetraenoyl)-glycerol + (9Z)-octadecenoyl-CoA = 1-(5Z,8Z,11Z,14Z-eicosatetraenoyl)-2-(9Z-octadecenoyl)-glycerol + CoA. The catalysed reaction is a 1-acylglycerol + an acyl-CoA = a 1,3-diacylglycerol + CoA. It catalyses the reaction 1-dodecanoylglycerol + (9Z)-octadecenoyl-CoA = 1-dodecanoyl-3-(9Z-octadecenoyl)-glycerol + CoA. It carries out the reaction 1-hexadecanoylglycerol + (9Z)-octadecenoyl-CoA = 1-(9Z-octadecenoyl)-3-hexadecanoylglycerol + CoA. The enzyme catalyses 1-octadecanoylglycerol + (9Z)-octadecenoyl-CoA = 1-octadecanoyl-3-(9Z-octadecenoyl)-glycerol + CoA. The catalysed reaction is 1-(9Z-octadecenoyl)-sn-glycerol + (9Z)-octadecenoyl-CoA = 1,3-di-(9Z-octadecenoyl)-glycerol + CoA. It catalyses the reaction 1-(9Z,12Z-octadecadienoyl)-glycerol + (9Z)-octadecenoyl-CoA = 1-(9Z-octadecenoyl)-3-(9Z,12Z-octadecadienoyl)-glycerol + CoA. It carries out the reaction 1-(9Z,12Z,15Z-octadecatrienoyl)-glycerol + (9Z)-octadecenoyl-CoA = 1-(9Z,12Z,15Z-octadecatrienoyl)-3-(9Z-octadecenoyl)-glycerol + CoA. The enzyme catalyses a 1-acyl-sn-glycerol + an acyl-CoA = a 1,3-diacyl-sn-glycerol + CoA. The catalysed reaction is a 3-acyl-sn-glycerol + an acyl-CoA = a 1,3-diacyl-sn-glycerol + CoA. It catalyses the reaction 3-octadecanoyl-sn-glycerol + (9Z)-octadecenoyl-CoA = 1-(9Z-octadecenoyl)-3-octadecanoyl-sn-glycerol + CoA. The protein operates within glycerolipid metabolism; triacylglycerol biosynthesis. Functionally, involved in glycerolipid synthesis and lipid metabolism. Catalyzes the formation of diacylglycerol, the precursor of triacylglycerol, by transferring the acyl chain of a fatty acyl-CoA to a monoacylglycerol, mainly at the sn-1 or sn-3 positions. It uses both sn-2-monoacylglycerol (2-acylglycerol) and sn-1-monoacylglycerol (1-acyl-sn-glycerol) equally well as substrates, and uses sn-3-monoacylglycerol (3-acyl-sn-glycerol) with lower efficiency. Probably not involved in absorption of dietary fat in the small intestine. This chain is 2-acylglycerol O-acyltransferase 1, found in Mus musculus (Mouse).